We begin with the raw amino-acid sequence, 289 residues long: Oxygen-dependent coproporphyrinogen-III oxidase (289 aa).

Residue Ser-82 participates in substrate binding. A divalent metal cation is bound by residues His-86 and His-96. The active-site Proton donor is the His-96. 98–100 is a binding site for substrate; it reads NYR. 2 residues coordinate a divalent metal cation: His-130 and His-160. An important for dimerization region spans residues 224–259; the sequence is YVEFNLVWDRGTIFGLQTNGRIESILMSMPPLVRWE.

Belongs to the aerobic coproporphyrinogen-III oxidase family. Homodimer. A divalent metal cation is required as a cofactor.

Its subcellular location is the cytoplasm. It carries out the reaction coproporphyrinogen III + O2 + 2 H(+) = protoporphyrinogen IX + 2 CO2 + 2 H2O. The protein operates within porphyrin-containing compound metabolism; protoporphyrin-IX biosynthesis; protoporphyrinogen-IX from coproporphyrinogen-III (O2 route): step 1/1. Involved in the heme and chlorophyll biosynthesis. Catalyzes the aerobic oxidative decarboxylation of propionate groups of rings A and B of coproporphyrinogen-III to yield the vinyl groups in protoporphyrinogen-IX. The sequence is that of Oxygen-dependent coproporphyrinogen-III oxidase from Gloeobacter violaceus (strain ATCC 29082 / PCC 7421).